Reading from the N-terminus, the 352-residue chain is MDPVPDLPESQGSFQELWETVSYPPLETLSLPTVNEPTGSWVATGDMFLLDQDLSGTFDDKIFDIPIEPVPTNEVNPPPTTVPVTTDYPGSYELELRFQKSGTAKSVTSTYSETLNKLYCQLAKTSPIEVRVSKEPPKGAILRATAVYKKTEHVADVVRRCPHHQNEDSVEHRSHLIRVEGSQLAQYFEDPYTKRQSVTVPYEPPQPGSEMTTILLSYMCNSSCMGGMNRRPILTILTLETEGLVLGRRCFEVRICACPGRDRKTEEESRQKTQPKKRKVTPNTSSSKRKKSHSSGEEEDNREVFHFEVYGRERYEFLKKINDGLELLEKESKSKNKDSGMVPSSGKKLKSN.

The segment at Met1 to Phe48 is transcription activation (acidic). Residues Asp87–Thr273 mediate DNA binding. Residues Cys161, His164, Cys220, and Cys224 each contribute to the Zn(2+) site. The segment at Arg254–Arg261 is interaction with DNA. Residues Asp262 to Gln271 are compositionally biased toward basic and acidic residues. A disordered region spans residues Asp262–Glu303. The Bipartite nuclear localization signal signature appears at Lys276–Lys291. The interval Arg302–Glu331 is oligomerization. A Nuclear export signal motif is present at residues Glu316 to Leu327. The disordered stretch occupies residues Lys330 to Asn352. The basic (repression of DNA-binding) stretch occupies residues Ser334–Lys350. The residue at position 351 (Ser351) is a Phosphoserine.

It belongs to the p53 family. As to quaternary structure, binds DNA as a homotetramer. Zn(2+) is required as a cofactor.

The protein resides in the cytoplasm. The protein localises to the nucleus. In terms of biological role, multifunctional transcription factor that induces cell cycle arrest, DNA repair or apoptosis upon binding to its target DNA sequence. Acts as a tumor suppressor in many tumor types; induces growth arrest or apoptosis depending on the physiological circumstances and cell type. Negatively regulates cell division by controlling expression of a set of genes required for this process. One of the activated genes is an inhibitor of cyclin-dependent kinases. Apoptosis induction seems to be mediated either by stimulation of BAX and FAS antigen expression, or by repression of Bcl-2 expression. In Oryzias latipes (Japanese rice fish), this protein is Cellular tumor antigen p53 (tp53).